A 112-amino-acid polypeptide reads, in one-letter code: Large ribosomal subunit protein uL22 (112 aa).

Belongs to the universal ribosomal protein uL22 family. Part of the 50S ribosomal subunit.

Its function is as follows. This protein binds specifically to 23S rRNA; its binding is stimulated by other ribosomal proteins, e.g. L4, L17, and L20. It is important during the early stages of 50S assembly. It makes multiple contacts with different domains of the 23S rRNA in the assembled 50S subunit and ribosome. In terms of biological role, the globular domain of the protein is located near the polypeptide exit tunnel on the outside of the subunit, while an extended beta-hairpin is found that lines the wall of the exit tunnel in the center of the 70S ribosome. This chain is Large ribosomal subunit protein uL22, found in Nitratidesulfovibrio vulgaris (strain DSM 19637 / Miyazaki F) (Desulfovibrio vulgaris).